Here is a 517-residue protein sequence, read N- to C-terminus: 2-isopropylmalate synthase (517 aa).

The Pyruvate carboxyltransferase domain maps to Ile-4–Lys-266. Mn(2+) is bound by residues Asp-13, His-201, His-203, and Asn-237. The tract at residues Glu-391 to Ser-517 is regulatory domain.

This sequence belongs to the alpha-IPM synthase/homocitrate synthase family. LeuA type 1 subfamily. In terms of assembly, homodimer. Requires Mn(2+) as cofactor.

It localises to the cytoplasm. The enzyme catalyses 3-methyl-2-oxobutanoate + acetyl-CoA + H2O = (2S)-2-isopropylmalate + CoA + H(+). It participates in amino-acid biosynthesis; L-leucine biosynthesis; L-leucine from 3-methyl-2-oxobutanoate: step 1/4. Functionally, catalyzes the condensation of the acetyl group of acetyl-CoA with 3-methyl-2-oxobutanoate (2-ketoisovalerate) to form 3-carboxy-3-hydroxy-4-methylpentanoate (2-isopropylmalate). The chain is 2-isopropylmalate synthase from Bacillus pumilus (strain SAFR-032).